The sequence spans 446 residues: Histidine--tRNA ligase (446 aa).

This sequence belongs to the class-II aminoacyl-tRNA synthetase family. In terms of assembly, homodimer.

It is found in the cytoplasm. It carries out the reaction tRNA(His) + L-histidine + ATP = L-histidyl-tRNA(His) + AMP + diphosphate + H(+). This Burkholderia cenocepacia (strain HI2424) protein is Histidine--tRNA ligase.